The chain runs to 277 residues: MGTLSCDPEARLTTVPLARRVADGHIPETGLRKSCGIATLENGSGPGLYVLPSTVGYVNHDCTKAASPAYSLARRPSEAPLQDSSPGPVYFLDPKVTRFGRSCPPAYSMQGRAKVRGLEVTPGPGAYSPEKAPPVRQRNAPAFTLGSRLRQKPPDTSVPAPNAYTMPPLWGSQIFIKPSSPSYTVVGRTPPARPPQDPSEIPGPGQYESPDPNTYRQRRPAFSILGRPRTPRPLEDTPGPGTHNPEQVTVNRARAPAYTMGIRHSKRASTMVGDTKC.

STPGR repeat units follow at residues 122 to 148 (PGPG…LGSR), 202 to 227 (PGPG…ILGR), and 238 to 263 (PGPG…MGIR). The interval 181–277 (PSYTVVGRTP…ASTMVGDTKC (97 aa)) is disordered.

Belongs to the CIMAP family.

The protein is Protein CIMAP1D (Cimap1d) of Mus musculus (Mouse).